The following is a 378-amino-acid chain: Cobalt-precorrin-5B C(1)-methyltransferase (378 aa).

This sequence belongs to the CbiD family.

The enzyme catalyses Co-precorrin-5B + S-adenosyl-L-methionine = Co-precorrin-6A + S-adenosyl-L-homocysteine. The protein operates within cofactor biosynthesis; adenosylcobalamin biosynthesis; cob(II)yrinate a,c-diamide from sirohydrochlorin (anaerobic route): step 6/10. Functionally, catalyzes the methylation of C-1 in cobalt-precorrin-5B to form cobalt-precorrin-6A. The protein is Cobalt-precorrin-5B C(1)-methyltransferase of Tolumonas auensis (strain DSM 9187 / NBRC 110442 / TA 4).